Here is a 258-residue protein sequence, read N- to C-terminus: Peptidase inhibitor 15 (258 aa).

Residues 1 to 21 form the signal peptide; it reads MIEMISISAAFLLSLLCETCG. The propeptide occupies 22-60; sequence LVLPKSSDLAIAASNYTIIKPDLSARLDPVKAPKARRKR. N-linked (GlcNAc...) asparagine glycosylation is found at Asn-36 and Asn-124. Residues 71–211 enclose the SCP domain; that stretch reads VEYHNQVRGK…RRAVYLVCNY (141 aa).

The protein belongs to the CRISP family.

The protein resides in the secreted. In terms of biological role, serine protease inhibitor which displays weak inhibitory activity against trypsin. May be involved in facial patterning during embryonic development. The chain is Peptidase inhibitor 15 (pi15) from Xenopus laevis (African clawed frog).